The primary structure comprises 972 residues: Coatomer subunit beta (972 aa).

HEAT repeat units lie at residues 79 to 113, 133 to 170, 317 to 354, 397 to 434, and 481 to 518; these read LLYF…DLQH, ELLE…VSEH, GCLE…SRNI, EIAA…LYPQ, and RQSI…QAGP. Residues 494-522 are disordered; the sequence is LKNQRKSQDEDDEATEESATKQAGPVILP.

As to quaternary structure, oligomeric complex that consists of at least the alpha, beta, beta', gamma, delta, epsilon and zeta subunits.

It is found in the cytoplasm. It localises to the golgi apparatus membrane. The protein localises to the cytoplasmic vesicle. Its subcellular location is the COPI-coated vesicle membrane. In terms of biological role, the coatomer is a cytosolic protein complex that binds to dilysine motifs and reversibly associates with Golgi non-clathrin-coated vesicles, which further mediate biosynthetic protein transport from the ER, via the Golgi up to the trans Golgi network. Coatomer complex is required for budding from Golgi membranes, and is essential for the retrograde Golgi-to-ER transport of dilysine-tagged proteins. In Candida glabrata (strain ATCC 2001 / BCRC 20586 / JCM 3761 / NBRC 0622 / NRRL Y-65 / CBS 138) (Yeast), this protein is Coatomer subunit beta.